Reading from the N-terminus, the 182-residue chain is CDP-diacylglycerol--glycerol-3-phosphate 3-phosphatidyltransferase (182 aa).

Residues 1–12 lie on the Cytoplasmic side of the membrane; sequence MQLNIPTWLTLF. The helical transmembrane segment at 13–37 threads the bilayer; it reads RVVMIPFFVLAFYLPFKWAPLCCAL. Residues 38–60 lie on the Periplasmic side of the membrane; the sequence is IFVLAAVTDWFDGFLARRWKQTT. The helical transmembrane segment at 61 to 81 threads the bilayer; that stretch reads RFGAFLDPVADKVMVAMALVL. The Cytoplasmic segment spans residues 82–86; it reads VAEHF. A helical membrane pass occupies residues 87–107; the sequence is HSWWITLPAATMIAREIIISA. Residues 108–145 lie on the Periplasmic side of the membrane; the sequence is LREWMAEIGKRSSVAVSWIGKVKTTAQMLALVTLLWRP. Residues 146–168 form a helical membrane-spanning segment; it reads DDIVSGIGIAALYVAAVLTFWSM. At 169-181 the chain is on the cytoplasmic side; the sequence is FQYLYAARHDLFE.

The protein belongs to the CDP-alcohol phosphatidyltransferase class-I family.

The protein resides in the cell inner membrane. The catalysed reaction is a CDP-1,2-diacyl-sn-glycerol + sn-glycerol 3-phosphate = a 1,2-diacyl-sn-glycero-3-phospho-(1'-sn-glycero-3'-phosphate) + CMP + H(+). The protein operates within phospholipid metabolism; phosphatidylglycerol biosynthesis; phosphatidylglycerol from CDP-diacylglycerol: step 1/2. Catalyzes the conversion of cytidine diphosphate diacylglycerol (CDP-DG) and glycerol 3-phosphate into phosphatidylglycerol. Essential for the synthesis of anionic phospholipids, thereby playing a role in balancing the ratio of zwitterionic and anionic phospholipids, which is thought to be important for normal membrane function. This is CDP-diacylglycerol--glycerol-3-phosphate 3-phosphatidyltransferase from Sodalis glossinidius (strain morsitans).